Consider the following 358-residue polypeptide: 5,10-methenyltetrahydromethanopterin hydrogenase (358 aa).

This sequence belongs to the HMD family. Homotetramer.

It carries out the reaction 5,10-methenyl-5,6,7,8-tetrahydromethanopterin + H2 = 5,10-methylenetetrahydromethanopterin + H(+). The protein operates within one-carbon metabolism; methanogenesis from CO(2); 5,10-methylene-5,6,7,8-tetrahydromethanopterin from 5,10-methenyl-5,6,7,8-tetrahydromethanopterin (hydrogen route): step 1/1. With respect to regulation, activity requires salt; 100 mM potassium phosphate, potassium chloride, and sodium chloride are equally effective. Catalyzes the reversible reduction of methenyl-H(4)MPT(+) to methylene-H(4)MPT. This chain is 5,10-methenyltetrahydromethanopterin hydrogenase, found in Methanopyrus kandleri (strain AV19 / DSM 6324 / JCM 9639 / NBRC 100938).